The primary structure comprises 111 residues: uncharacterized protein (111 aa).

A lipid anchor (N-myristoyl glycine; by host) is attached at Gly2.

This is an uncharacterized protein from Acanthamoeba polyphaga mimivirus (APMV).